A 137-amino-acid polypeptide reads, in one-letter code: Fluoride-specific ion channel FluC 1 (137 aa).

The next 4 helical transmembrane spans lie at 4 to 24, 37 to 57, 67 to 87, and 98 to 118; these read LIYIIVGIAGILGALSRYYLG, LATLLINLAGCFLLAWLTTYI, VITGIGTGFIGSFTTFSTLSV, and WGIAFLYVSCSILGGLIMSGL. The Na(+) site is built by Gly77 and Thr80.

This sequence belongs to the fluoride channel Fluc/FEX (TC 1.A.43) family.

The protein resides in the cell membrane. It catalyses the reaction fluoride(in) = fluoride(out). With respect to regulation, na(+) is not transported, but it plays an essential structural role and its presence is essential for fluoride channel function. Functionally, fluoride-specific ion channel. Important for reducing fluoride concentration in the cell, thus reducing its toxicity. This Bacillus anthracis protein is Fluoride-specific ion channel FluC 1.